Reading from the N-terminus, the 985-residue chain is Alanine--tRNA ligase, mitochondrial (985 aa).

Residues 1 to 23 (MAASVAAAARRLRRAIRRSPAWR) constitute a mitochondrion transit peptide. Residues Arg110, His128, Trp210, and 240-242 (LWN) each bind ATP. Residues Asn242 and Asp265 each contribute to the L-alanine site. Position 269 (Gly269) interacts with ATP. Residues His632, His636, Cys749, and His753 each coordinate Zn(2+).

The protein belongs to the class-II aminoacyl-tRNA synthetase family. Monomer. Zn(2+) is required as a cofactor.

It localises to the mitochondrion. It catalyses the reaction tRNA(Ala) + L-alanine + ATP = L-alanyl-tRNA(Ala) + AMP + diphosphate. It carries out the reaction (S)-lactate + ATP + H(+) = (S)-lactoyl-AMP + diphosphate. The catalysed reaction is (S)-lactoyl-AMP + L-lysyl-[protein] = N(6)-[(S)-lactoyl]-L-lysyl-[protein] + AMP + 2 H(+). Its function is as follows. Catalyzes the attachment of alanine to tRNA(Ala) in a two-step reaction: alanine is first activated by ATP to form Ala-AMP and then transferred to the acceptor end of tRNA(Ala). Also edits incorrectly charged tRNA(Ala) via its editing domain. In presence of high levels of lactate, also acts as a protein lactyltransferase that mediates lactylation of lysine residues in target proteins, such as CGAS. Acts as an inhibitor of cGAS/STING signaling by catalyzing lactylation of CGAS, preventing the formation of liquid-like droplets in which CGAS is activated. The polypeptide is Alanine--tRNA ligase, mitochondrial (Homo sapiens (Human)).